Reading from the N-terminus, the 187-residue chain is Probable DNA endonuclease SmrA (187 aa).

The 82-residue stretch at 88–169 (LNLLRQPVEE…GSGACYVALR (82 aa)) folds into the Smr domain.

Functionally, has DNA endonuclease activity. Binds DNA. This is Probable DNA endonuclease SmrA (smrA) from Escherichia coli (strain K12).